The sequence spans 628 residues: 69 kDa protein (628 aa).

Disordered regions lie at residues 1–25 (MSNG…SAPD), 141–332 (HFHA…FRPS), 346–404 (LGHL…LLPN), 418–493 (RGKI…DPVL), and 535–628 (QTVL…PDTD). Low complexity predominate over residues 299–312 (PPTTTSRPTGPPSR). Residues 320–331 (YQSSPHTPNFRP) show a composition bias toward polar residues. The span at 434 to 450 (GAPPPPRRLPSPAPRPQ) shows a compositional bias: pro residues.

Belongs to the tymoviridae protein p69 family.

Its function is as follows. Acts as a suppressor of RNA-mediated gene silencing, also known as post-transcriptional gene silencing (PTGS), a mechanism of plant viral defense that limits the accumulation of viral RNAs. In Brassica (Chinese cabbage), this protein is 69 kDa protein.